We begin with the raw amino-acid sequence, 839 residues long: AMP deaminase (839 aa).

The helical transmembrane segment at 8-28 (LALAALFGASFVAVSGFFMHF) threads the bilayer. A disordered region spans residues 40–167 (ERKENPDGDE…DDDDNLTNSE (128 aa)). Gly residues predominate over residues 85 to 94 (DGGGGGGGDT). Phosphoserine occurs at positions 134 and 140. The span at 153–162 (SVEESDDDDN) shows a compositional bias: acidic residues. A Phosphoserine modification is found at Ser-203. An ATP-binding site is contributed by 289 to 296 (AHYPQGKS). Residues His-391 and His-393 each coordinate Zn(2+). Residues His-393 and 462 to 467 (KFNLKY) contribute to the substrate site. His-659 contributes to the Zn(2+) binding site. Glu-662 provides a ligand contact to substrate. His-681 (proton acceptor) is an active-site residue. Asp-736 lines the Zn(2+) pocket. 737–740 (DPLQ) is a substrate binding site.

This sequence belongs to the metallo-dependent hydrolases superfamily. Adenosine and AMP deaminases family. In terms of assembly, homodimer. Interacts with AHK4. Interacts with EER5. Zn(2+) is required as a cofactor. Expressed in seedlings, roots, leaves, flowers, pollen grains, pollen tubes and siliques, and at a lower level in stems.

It is found in the membrane. It localises to the microsome membrane. The enzyme catalyses AMP + H2O + H(+) = IMP + NH4(+). It participates in purine metabolism; IMP biosynthesis via salvage pathway; IMP from AMP: step 1/1. Its activity is regulated as follows. Activated by ATP. Activated by sulfate ions (in vitro). Inhibited by phosphate ions. AMP deaminase plays a critical role in energy metabolism. Essential for the transition from zygote to embryo. This is AMP deaminase from Arabidopsis thaliana (Mouse-ear cress).